The chain runs to 268 residues: Ubiquinone biosynthesis protein COQ4 homolog 1, mitochondrial (268 aa).

Positions 1–10 (MFLRRVHPVR) are enriched in basic residues. Residues 1–18 (MFLRRVHPVRLGHASQRS) constitute a mitochondrion transit peptide. A disordered region spans residues 1–44 (MFLRRVHPVRLGHASQRSLTTTKSRNESTTTTVEAPQAAPSPPP). The span at 20 to 38 (TTTKSRNESTTTTVEAPQA) shows a compositional bias: low complexity. Zn(2+) is bound by residues His177, Asp178, His181, and Glu193.

Belongs to the COQ4 family. Component of a multi-subunit COQ enzyme complex. Zn(2+) is required as a cofactor.

It localises to the mitochondrion inner membrane. The enzyme catalyses a 4-hydroxy-3-methoxy-5-(all-trans-polyprenyl)benzoate + H(+) = a 2-methoxy-6-(all-trans-polyprenyl)phenol + CO2. The protein operates within cofactor biosynthesis; ubiquinone biosynthesis. Lyase that catalyzes the C1-decarboxylation of 4-hydroxy-3-methoxy-5-(all-trans-polyprenyl)benzoic acid into 2-methoxy-6-(all-trans-polyprenyl)phenol during ubiquinone biosynthesis. This is Ubiquinone biosynthesis protein COQ4 homolog 1, mitochondrial from Culex quinquefasciatus (Southern house mosquito).